The primary structure comprises 397 residues: t-SNARE affecting a late Golgi compartment protein 2 (397 aa).

Residues 1–317 (MFRDRTNLFL…HYQKRTQKCK (317 aa)) are Cytoplasmic-facing. Residues 74–96 (DIAQDVDDYLLEVRRLSEQLAKV) are a coiled coil. The residue at position 109 (Ser-109) is a Phosphoserine. Residues 244-306 (EAYLRERDEE…KSADKELNKA (63 aa)) enclose the t-SNARE coiled-coil homology domain. Residues 318–338 (VILLLTLCVIALFFFVMLKPH) traverse the membrane as a helical; Anchor for type IV membrane protein segment. Residues 339–397 (GGGSGGRNNGSNKYNNDDNKTVNNSHDDGSNTHINDEESNLPSIVEVTESENDALDDLL) are Vesicular-facing. A disordered region spans residues 341–397 (GSGGRNNGSNKYNNDDNKTVNNSHDDGSNTHINDEESNLPSIVEVTESENDALDDLL). A compositionally biased stretch (basic and acidic residues) spans 353–374 (NNDDNKTVNNSHDDGSNTHIND). Acidic residues predominate over residues 386–397 (TESENDALDDLL).

This sequence belongs to the syntaxin family. As to quaternary structure, interacts with VPS45.

The protein resides in the golgi apparatus. It is found in the trans-Golgi network membrane. It localises to the endosome membrane. Its function is as follows. t-SNARE that functions in transport from the endosome to the late Golgi and on the endocytic pathway. In Saccharomyces cerevisiae (strain ATCC 204508 / S288c) (Baker's yeast), this protein is t-SNARE affecting a late Golgi compartment protein 2 (TLG2).